A 251-amino-acid chain; its full sequence is Aliphatic sulfonates import ATP-binding protein SsuB (251 aa).

In terms of domain architecture, ABC transporter spans Val-3–Gln-231. Gly-39–Ser-46 is a binding site for ATP.

This sequence belongs to the ABC transporter superfamily. Aliphatic sulfonates importer (TC 3.A.1.17.2) family. In terms of assembly, the complex is composed of two ATP-binding proteins (SsuB), two transmembrane proteins (SsuC) and a solute-binding protein (SsuA).

Its subcellular location is the cell membrane. It carries out the reaction ATP + H2O + aliphatic sulfonate-[sulfonate-binding protein]Side 1 = ADP + phosphate + aliphatic sulfonateSide 2 + [sulfonate-binding protein]Side 1.. Its function is as follows. Part of the ABC transporter complex SsuABC involved in aliphatic sulfonates import. Responsible for energy coupling to the transport system. This chain is Aliphatic sulfonates import ATP-binding protein SsuB, found in Bacillus thuringiensis subsp. konkukian (strain 97-27).